The following is a 537-amino-acid chain: NEDD4-binding protein 3 (537 aa).

S172 carries the post-translational modification Phosphoserine. Disordered regions lie at residues 173 to 234 (LDEG…VLSC), 328 to 361 (KELR…EARW), and 423 to 458 (QEQA…REGA). A compositionally biased stretch (low complexity) spans 178–207 (PEPSLSDSSSGGSFGRSPGTGPSPFSSSLG). Residues 295–501 (VERLHEVAQK…RVLRYQREIQ (207 aa)) are a coiled coil. Over residues 351-361 (PNARPEEEARW) the composition is skewed to basic and acidic residues.

It belongs to the N4BP3 family. As to quaternary structure, binds NEDD4. Interacts with 14-3-3 proteins. Interacts with MAVS.

It localises to the cytoplasmic vesicle. It is found in the cell projection. The protein resides in the axon. The protein localises to the dendrite. In terms of biological role, plays a positive role in the antiviral innate immune signaling pathway. Mechanistically, interacts with MAVS and functions as a positive regulator to promote 'Lys-63'-linked polyubiquitination of MAVS and thus strengthens the interaction between MAVS and TRAF2. Also plays a role in axon and dendrite arborization during cranial nerve development. May also be important for neural crest migration and early development of other anterior structures including eye, brain and cranial cartilage. In Mus musculus (Mouse), this protein is NEDD4-binding protein 3 (N4bp3).